The chain runs to 678 residues: Methionine--tRNA ligase (678 aa).

The 'HIGH' region motif lies at 14–24 (PYANGSIHLGH). The Zn(2+) site is built by Cys145, Cys148, Cys158, and Cys161. Residues 331 to 335 (KMSKS) carry the 'KMSKS' region motif. Position 334 (Lys334) interacts with ATP. The tRNA-binding domain occupies 576–678 (AFAAVDLRIA…SGAKPGQRVK (103 aa)).

The protein belongs to the class-I aminoacyl-tRNA synthetase family. MetG type 1 subfamily. Homodimer. Zn(2+) serves as cofactor.

It localises to the cytoplasm. The enzyme catalyses tRNA(Met) + L-methionine + ATP = L-methionyl-tRNA(Met) + AMP + diphosphate. In terms of biological role, is required not only for elongation of protein synthesis but also for the initiation of all mRNA translation through initiator tRNA(fMet) aminoacylation. The protein is Methionine--tRNA ligase of Ectopseudomonas mendocina (strain ymp) (Pseudomonas mendocina).